Consider the following 80-residue polypeptide: Putative defensin-like protein 23 (80 aa).

A signal peptide spans 1 to 25 (MTTTMKIMSFAMLLVLLFSIDVVEG). Disulfide bonds link Cys-31–Cys-80, Cys-41–Cys-66, Cys-50–Cys-76, and Cys-54–Cys-78.

The protein belongs to the DEFL family.

It localises to the secreted. This chain is Putative defensin-like protein 23, found in Arabidopsis thaliana (Mouse-ear cress).